The following is a 384-amino-acid chain: CDP-diacylglycerol--serine O-phosphatidyltransferase (384 aa).

Belongs to the CDP-alcohol phosphatidyltransferase class-I family.

The protein resides in the membrane. The catalysed reaction is a CDP-1,2-diacyl-sn-glycerol + L-serine = a 1,2-diacyl-sn-glycero-3-phospho-L-serine + CMP + H(+). The protein operates within phospholipid metabolism; phosphatidylethanolamine biosynthesis; phosphatidylethanolamine from CDP-diacylglycerol: step 1/2. In Encephalitozoon cuniculi (strain GB-M1) (Microsporidian parasite), this protein is CDP-diacylglycerol--serine O-phosphatidyltransferase (PSS).